Reading from the N-terminus, the 257-residue chain is Imidazole glycerol phosphate synthase subunit HisF (257 aa).

Catalysis depends on residues D11 and D130.

It belongs to the HisA/HisF family. As to quaternary structure, heterodimer of HisH and HisF.

It localises to the cytoplasm. The catalysed reaction is 5-[(5-phospho-1-deoxy-D-ribulos-1-ylimino)methylamino]-1-(5-phospho-beta-D-ribosyl)imidazole-4-carboxamide + L-glutamine = D-erythro-1-(imidazol-4-yl)glycerol 3-phosphate + 5-amino-1-(5-phospho-beta-D-ribosyl)imidazole-4-carboxamide + L-glutamate + H(+). It participates in amino-acid biosynthesis; L-histidine biosynthesis; L-histidine from 5-phospho-alpha-D-ribose 1-diphosphate: step 5/9. In terms of biological role, IGPS catalyzes the conversion of PRFAR and glutamine to IGP, AICAR and glutamate. The HisF subunit catalyzes the cyclization activity that produces IGP and AICAR from PRFAR using the ammonia provided by the HisH subunit. This Shewanella denitrificans (strain OS217 / ATCC BAA-1090 / DSM 15013) protein is Imidazole glycerol phosphate synthase subunit HisF.